We begin with the raw amino-acid sequence, 388 residues long: Staphopain A (388 aa).

A signal peptide spans methionine 1–alanine 25. The propeptide occupies glutamate 26–threonine 214. Residues cysteine 238, histidine 334, and asparagine 355 contribute to the active site.

It belongs to the peptidase C47 family. In the cytoplasm, prematurely activated/folded ScpA forms a stable non-covalent complex with ScpB. In terms of processing, cleavage leads to the activation of ScpA probably by an auto-catalytic manner.

The protein resides in the secreted. It carries out the reaction Broad endopeptidase action on proteins including elastin, but rather limited hydrolysis of small-molecule substrates. Assays are conveniently made with hemoglobin, casein or Z-Phe-Arg-NHMec as substrate.. With respect to regulation, prematurely activated/folded staphopain A is inhibited by staphostatin A (ScpB), which is probably required to protect staphylococcal cytoplasmic proteins from degradation by ScpA. Also inactivated by heavy metal ions such as Hg(2+) or Ag(+), iodoacetamide, E-64 and human plasma. Functionally, cysteine protease that plays an important role in the inhibition of host innate immune response. Cleaves host elastins found in connective tissues, pulmonary surfactant protein A in the lungs, and the chemokine receptor CXCR2 on leukocytes. Proteolytic cleavage of surfactant protein A impairs bacterial phagocytosis by neutrophils while CXCR2 degradation blocks neutrophil activation and chemotaxis. Additionally, promotes vascular leakage by activating the plasma kallikerin/kinin system, resulting in hypotension. The protein is Staphopain A (sspP) of Staphylococcus aureus.